A 580-amino-acid polypeptide reads, in one-letter code: Arginine--tRNA ligase (580 aa).

Residues Pro-123–His-133 carry the 'HIGH' region motif.

The protein belongs to the class-I aminoacyl-tRNA synthetase family. In terms of assembly, monomer.

It is found in the cytoplasm. The catalysed reaction is tRNA(Arg) + L-arginine + ATP = L-arginyl-tRNA(Arg) + AMP + diphosphate. In Buchnera aphidicola subsp. Schizaphis graminum (strain Sg), this protein is Arginine--tRNA ligase (argS).